A 743-amino-acid polypeptide reads, in one-letter code: UvrABC system protein C (743 aa).

In terms of domain architecture, GIY-YIG spans 16–95 (VDPGVYKFRD…IKEFDPRFNV (80 aa)). Residues 208-243 (DKLVRQLEARMQQASEELDFETAARLRDDVGALRRA) enclose the UVR domain. Disordered stretches follow at residues 497 to 543 (AEAA…QTGR) and 694 to 743 (PSAD…TGVE). Over residues 506–520 (QASDTDGDQVSDTDG) the composition is skewed to acidic residues. Residues 734-743 (QSASQRTGVE) show a composition bias toward polar residues.

This sequence belongs to the UvrC family. Interacts with UvrB in an incision complex.

It localises to the cytoplasm. Its function is as follows. The UvrABC repair system catalyzes the recognition and processing of DNA lesions. UvrC both incises the 5' and 3' sides of the lesion. The N-terminal half is responsible for the 3' incision and the C-terminal half is responsible for the 5' incision. In Rhodococcus opacus (strain B4), this protein is UvrABC system protein C.